Reading from the N-terminus, the 476-residue chain is 3-isopropylmalate dehydratase large subunit (476 aa).

[4Fe-4S] cluster-binding residues include Cys-357, Cys-417, and Cys-420.

The protein belongs to the aconitase/IPM isomerase family. LeuC type 1 subfamily. As to quaternary structure, heterodimer of LeuC and LeuD. The cofactor is [4Fe-4S] cluster.

The catalysed reaction is (2R,3S)-3-isopropylmalate = (2S)-2-isopropylmalate. It functions in the pathway amino-acid biosynthesis; L-leucine biosynthesis; L-leucine from 3-methyl-2-oxobutanoate: step 2/4. In terms of biological role, catalyzes the isomerization between 2-isopropylmalate and 3-isopropylmalate, via the formation of 2-isopropylmaleate. This chain is 3-isopropylmalate dehydratase large subunit, found in Mycobacterium avium (strain 104).